The primary structure comprises 226 residues: MNENLFASFIAPTILGLPAAVLIILLPPLLIPTSKYLINNRLIATQQWLIQLTSKQMMTMHNAKGRTWSLMLMWLIIFIATTNLLGLLPHSFTPTTQLSMNLAMAIPLWAGAVTTGFRSKTKNALAHLLPQGTPTPLIPMLVIIETISLFIQPMALAVRLTANITAGHLLMHLIGSATLAMSTTNLPSTLIIFTVLILLTMLEIAVALIQAYVFTLLVSLYLHENT.

The next 6 membrane-spanning stretches (helical) occupy residues 5–25 (LFAS…LIIL), 68–88 (WSLM…LGLL), 97–117 (QLSM…TTGF), 138–158 (IPML…ALAV), 160–180 (LTAN…ATLA), and 189–209 (TLII…VALI).

It belongs to the ATPase A chain family. Component of the ATP synthase complex composed at least of ATP5F1A/subunit alpha, ATP5F1B/subunit beta, ATP5MC1/subunit c (homooctomer), MT-ATP6/subunit a, MT-ATP8/subunit 8, ATP5ME/subunit e, ATP5MF/subunit f, ATP5MG/subunit g, ATP5MK/subunit k, ATP5MJ/subunit j, ATP5F1C/subunit gamma, ATP5F1D/subunit delta, ATP5F1E/subunit epsilon, ATP5PF/subunit F6, ATP5PB/subunit b, ATP5PD/subunit d, ATP5PO/subunit OSCP. ATP synthase complex consists of a soluble F(1) head domain (subunits alpha(3) and beta(3)) - the catalytic core - and a membrane F(0) domain - the membrane proton channel (subunits c, a, 8, e, f, g, k and j). These two domains are linked by a central stalk (subunits gamma, delta, and epsilon) rotating inside the F1 region and a stationary peripheral stalk (subunits F6, b, d, and OSCP). Interacts with DNAJC30; interaction is direct.

Its subcellular location is the mitochondrion inner membrane. It catalyses the reaction H(+)(in) = H(+)(out). Its function is as follows. Subunit a, of the mitochondrial membrane ATP synthase complex (F(1)F(0) ATP synthase or Complex V) that produces ATP from ADP in the presence of a proton gradient across the membrane which is generated by electron transport complexes of the respiratory chain. ATP synthase complex consist of a soluble F(1) head domain - the catalytic core - and a membrane F(1) domain - the membrane proton channel. These two domains are linked by a central stalk rotating inside the F(1) region and a stationary peripheral stalk. During catalysis, ATP synthesis in the catalytic domain of F(1) is coupled via a rotary mechanism of the central stalk subunits to proton translocation. With the subunit c (ATP5MC1), forms the proton-conducting channel in the F(0) domain, that contains two crucial half-channels (inlet and outlet) that facilitate proton movement from the mitochondrial intermembrane space (IMS) into the matrix. Protons are taken up via the inlet half-channel and released through the outlet half-channel, following a Grotthuss mechanism. The protein is ATP synthase F(0) complex subunit a of Gorilla gorilla gorilla (Western lowland gorilla).